The sequence spans 704 residues: Tetratricopeptide repeat protein 12 (704 aa).

Thr-71 carries the phosphothreonine modification. TPR repeat units follow at residues 105–138 (ADAL…LKDM), 139–172 (KVLY…DENC), and 173–206 (TKAY…NPKL).

The protein localises to the cytoplasm. In terms of biological role, cytoplasmic protein that plays a role in the proper assembly of dynein arm complexes in motile cilia in both respiratory cells and sperm flagella. In Mus musculus (Mouse), this protein is Tetratricopeptide repeat protein 12 (Ttc12).